The primary structure comprises 384 residues: Probable inactive patatin-like protein 9 (384 aa).

The PNPLA domain occupies 33 to 234 (LSIDGGGTTG…VMNNPTAAAV (202 aa)). Residues 37 to 42 (GGGTTG) carry the GXGXXG motif. Residue D221 is the Proton acceptor of the active site. The short motif at 221–223 (DGG) is the DGA/G element. Residues 363 to 384 (GKSSLPPSPCKESAVNPLADGR) are disordered.

This sequence belongs to the patatin family. In terms of tissue distribution, highly expressed in roots and at lower levels in flowers and siliques.

The chain is Probable inactive patatin-like protein 9 (PLP9) from Arabidopsis thaliana (Mouse-ear cress).